A 110-amino-acid polypeptide reads, in one-letter code: NADH-quinone oxidoreductase subunit K (110 aa).

A run of 3 helical transmembrane segments spans residues 13–33 (VTHGLIFSILLFVISVAGIII), 38–58 (ILILLMSIELMLLAVNTNFLI), and 70–90 (VFVFFIMAVAAAETAIGLAIV).

Belongs to the complex I subunit 4L family. As to quaternary structure, NDH-1 is composed of 14 different subunits. Subunits NuoA, H, J, K, L, M, N constitute the membrane sector of the complex.

It is found in the cell inner membrane. It catalyses the reaction a quinone + NADH + 5 H(+)(in) = a quinol + NAD(+) + 4 H(+)(out). Its function is as follows. NDH-1 shuttles electrons from NADH, via FMN and iron-sulfur (Fe-S) centers, to quinones in the respiratory chain. The immediate electron acceptor for the enzyme in this species is believed to be ubiquinone. Couples the redox reaction to proton translocation (for every two electrons transferred, four hydrogen ions are translocated across the cytoplasmic membrane), and thus conserves the redox energy in a proton gradient. The polypeptide is NADH-quinone oxidoreductase subunit K (Francisella tularensis subsp. holarctica (strain FTNF002-00 / FTA)).